A 128-amino-acid polypeptide reads, in one-letter code: Adrenodoxin (128 aa).

S3 carries the phosphoserine modification. Residue K6 is modified to N6-acetyllysine; alternate. K6 carries the N6-succinyllysine; alternate modification. Residues 7–111 (VTVNFINRDG…NMTVRVPDAV (105 aa)) form the 2Fe-2S ferredoxin-type domain. The [2Fe-2S] cluster site is built by C46, C52, C55, and C92. K98 is modified (N6-succinyllysine). Phosphoserine is present on S117.

Belongs to the adrenodoxin/putidaredoxin family. In terms of assembly, interacts with CYP11A1. The cofactor is [2Fe-2S] cluster.

The protein resides in the mitochondrion matrix. In terms of biological role, essential for the synthesis of various steroid hormones. Participates in the reduction of mitochondrial cytochrome P450 for steroidogenesis. Transfers electrons from adrenodoxin reductase to CYP11A1, a cytochrome P450 that catalyzes cholesterol side-chain cleavage. Does not form a ternary complex with adrenodoxin reductase and CYP11A1 but shuttles between the two enzymes to transfer electrons. This Ovis aries (Sheep) protein is Adrenodoxin (FDX1).